Here is a 539-residue protein sequence, read N- to C-terminus: MMMTKQKNTLADRLNIGGEVRELRLGATFNPKNSSTAFHTIKYDFKPASVDPNRMAAVDVGSNNQVTVTVPNLENSGVPHTVYKGNQRKYAKECLMIYDKETGAITLEKLNHNIQVKKTRSEMTHHKPSFLPATNINHNNIPMSTNGSGPGPGPGPGSGPSPPLSGSASGSGQKLENSTMRISSKTKVSTGSRRNNIIDFKPRNSPMQQSSPSRPVASHRSPQSAPAWNANNAQQTLPSIPMIMDDDDFGLGAALHNGTGGGQANISGSSTGSSTGQPDYGGGGSSSSSTMHRQRQVPQHGQHGKRQQMHQNHQQHPSPPMHQQQQQQQQQQHYGRGINNGGGSNNYAQQQQPQQHHQQQEQQRPSSSSTYSHHSNNMPMDLDFPRENDLTSQTMAQAGAAIEEQIGGVLSASSSSSESDSSDSDSGSESDDSTDDESRPMQQQQLPNLGLGSISPSYNNHQQLQQQPPQQQQQQQQQQQYNHHMQQQHQPQQQHHHHHQQQQQQQQQSDMYTSNRGFPNDLLQNDLQLSSNSSDDDDD.

Positions 119–539 are disordered; that stretch reads TRSEMTHHKP…SSNSSDDDDD (421 aa). Polar residues predominate over residues 132-146; it reads PATNINHNNIPMSTN. Residues 151 to 163 show a composition bias toward pro residues; sequence GPGPGPGSGPSPP. Over residues 174-195 the composition is skewed to polar residues; it reads KLENSTMRISSKTKVSTGSRRN. Ser-205 bears the Phosphoserine mark. Residues 220–238 show a composition bias toward polar residues; that stretch reads RSPQSAPAWNANNAQQTLP. Composition is skewed to low complexity over residues 267 to 278, 309 to 337, and 345 to 375; these read SGSSTGSSTGQP, MHQN…YGRG, and NNYA…SHHS. Acidic residues predominate over residues 420 to 435; sequence DSSDSDSGSESDDSTD. Composition is skewed to low complexity over residues 461–493 and 520–533; these read HQQL…QPQQ and NDLL…SSNS.

This sequence belongs to the EAF family.

The protein resides in the nucleus. Functionally, promotes transcriptional elongation by Su(Tpl)/ELL. Essential for development. This is Ell-associated factor Eaf from Drosophila willistoni (Fruit fly).